A 121-amino-acid polypeptide reads, in one-letter code: Large ribosomal subunit protein uL14 (121 aa).

The protein belongs to the universal ribosomal protein uL14 family. In terms of assembly, part of the 50S ribosomal subunit. Forms a cluster with proteins L3 and L19. In the 70S ribosome, L14 and L19 interact and together make contacts with the 16S rRNA in bridges B5 and B8.

Functionally, binds to 23S rRNA. Forms part of two intersubunit bridges in the 70S ribosome. This is Large ribosomal subunit protein uL14 from Synechococcus sp. (strain RCC307).